We begin with the raw amino-acid sequence, 655 residues long: Ribonuclease 3 (655 aa).

2 disordered regions span residues 1 to 148 and 171 to 376; these read MENL…NSEK and LIAP…NIPL. The unknown stretch occupies residues 1-400; that stretch reads MENLEKNTKK…NYIKDNYPVI (400 aa). A compositionally biased stretch (basic residues) spans 8 to 20; it reads TKKKIKKPNNFKK. Composition is skewed to basic and acidic residues over residues 21–34 and 69–89; these read NNKDKTEELKDKPT and DYEKKIREIQAKEAKKIRSDE. Low complexity predominate over residues 92-102; it reads NNNSKKQNNNK. The segment covering 103 to 115 has biased composition (basic residues); that stretch reads QAKKKANKNKKQK. Over residues 135–148 the composition is skewed to polar residues; that stretch reads AANNQVKAIPNSEK. Positions 206-223 are enriched in low complexity; that stretch reads NNFVNNQKNHNKNNAGNK. Polar residues-rich tracts occupy residues 229–242 and 250–259; these read PTKPLNQSKLSKST and PNFTSNQPKP. Composition is skewed to basic and acidic residues over residues 260 to 274 and 298 to 309; these read TQKEDSKKVKAKKAE and DQTKKKQPKENK. Over residues 310–332 the composition is skewed to low complexity; that stretch reads NQQIKAVNLNNNQQKTNNNNQKN. The span at 333–350 shows a compositional bias: basic and acidic residues; it reads SVDKSENDNNKKKSEANQ. Positions 351–360 are enriched in low complexity; that stretch reads KQENLNPNNN. Positions 401 to 655 are RNase 3; sequence YADLKEKNRL…KFRGLLKLEK (255 aa). Residues 432–556 enclose the RNase III domain; the sequence is LELLLKKFKV…FIGAMYLDQG (125 aa). E472 provides a ligand contact to Mg(2+). D476 is a catalytic residue. The Mg(2+) site is built by D542 and E545. E545 is an active-site residue. Positions 582-649 constitute a DRBM domain; it reads DYKSIFQEII…AKEAISKFRG (68 aa).

Belongs to the ribonuclease III family. As to quaternary structure, homodimer. Mg(2+) serves as cofactor.

The protein resides in the cytoplasm. The enzyme catalyses Endonucleolytic cleavage to 5'-phosphomonoester.. In terms of biological role, digests double-stranded RNA. Involved in the processing of primary rRNA transcript to yield the immediate precursors to the large and small rRNAs (23S and 16S). Processes some mRNAs, and tRNAs when they are encoded in the rRNA operon. Processes pre-crRNA and tracrRNA of type II CRISPR loci if present in the organism. The sequence is that of Ribonuclease 3 (rnc) from Mycoplasmoides gallisepticum (strain R(low / passage 15 / clone 2)) (Mycoplasma gallisepticum).